Here is a 129-residue protein sequence, read N- to C-terminus: Virion-associated protein (129 aa).

Coiled-coil stretches lie at residues 1 to 31 (MANL…ILEM) and 38 to 59 (IKES…LIND). The segment at 122 to 129 (PAGWPNQF) is capsid binding.

This sequence belongs to the caulimovirus ORF III family. As to quaternary structure, homotetramer, through coiled-coil domain. Homotrimer when interacts with icosehadral capsid. Interacts with capsid protein, and with Movement protein.

It is found in the virion. The protein resides in the host cell junction. The protein localises to the host plasmodesma. In terms of biological role, plays a role in virus cell-to-cell and plant-to-plant transmission. Interacts with virion icosahedral capsid and movement protein, thereby facilitating virion cell-to-cell transmission through plasmodesmata opened by viral movement protein. Also interacts with aphid transmission factor, attaching the virion to aphid stylet when the animal feeds on an virus infected plant. Aphid saliva may later detach the virion, inducing release of infectious particles when the animal feeds on a new plant. The sequence is that of Virion-associated protein from Arabidopsis thaliana (Mouse-ear cress).